A 32-amino-acid polypeptide reads, in one-letter code: Protamine-1 (32 aa).

The disordered stretch occupies residues 1–32 (PRRRRASSGRPVRRRRRPKMSRRRRRGGRRRR).

Testis.

Its subcellular location is the nucleus. It is found in the chromosome. Its function is as follows. Protamines substitute for histones in the chromatin of sperm during the haploid phase of spermatogenesis. They compact sperm DNA into a highly condensed, stable and inactive complex. The polypeptide is Protamine-1 (Esox lucius (Northern pike)).